The primary structure comprises 338 residues: MEMTHYEKTPLIRQVFNNGKTNSWFYVKHEILQPGGSFKSRGIGHLIRKSNEEALSEGSGKLAVFSSSGGNAGLAAATACRSMALNCSVVVPKTTKPRMVKKIQSAGAKVIIHGDHWGEADEYLRHKLMAQESQHGSKTLYVHPFDNETIWEGHSTIVDEIIEQLKENDISLPRVKALVCSVGGGGLFSGIIKGLDRNHLAEKIPVVAVETAGCDVLNKSLKNGSPVTLEKLTSVATSLASPYIASFAFESFNKYGCKSVVLSDQDVLATCLRYADDYNFIVEPACGASLHLCYHPEILEDILEQKIYEDDIVIIIACGGSCMTYEDLVKASSTLNVS.

Lysine 39 is subject to N6-(pyridoxal phosphate)lysine.

This sequence belongs to the serine/threonine dehydratase family. It depends on pyridoxal 5'-phosphate as a cofactor.

The protein localises to the cytoplasm. It carries out the reaction L-serine = pyruvate + NH4(+). It functions in the pathway carbohydrate biosynthesis; gluconeogenesis. The polypeptide is L-serine dehydratase (SDL1) (Saccharomyces cerevisiae (strain YJM789) (Baker's yeast)).